The chain runs to 235 residues: Phosphoribosylaminoimidazole-succinocarboxamide synthase (235 aa).

Belongs to the SAICAR synthetase family.

The enzyme catalyses 5-amino-1-(5-phospho-D-ribosyl)imidazole-4-carboxylate + L-aspartate + ATP = (2S)-2-[5-amino-1-(5-phospho-beta-D-ribosyl)imidazole-4-carboxamido]succinate + ADP + phosphate + 2 H(+). The protein operates within purine metabolism; IMP biosynthesis via de novo pathway; 5-amino-1-(5-phospho-D-ribosyl)imidazole-4-carboxamide from 5-amino-1-(5-phospho-D-ribosyl)imidazole-4-carboxylate: step 1/2. The chain is Phosphoribosylaminoimidazole-succinocarboxamide synthase from Clostridium acetobutylicum (strain ATCC 824 / DSM 792 / JCM 1419 / IAM 19013 / LMG 5710 / NBRC 13948 / NRRL B-527 / VKM B-1787 / 2291 / W).